The sequence spans 508 residues: tRNA-2-methylthio-N(6)-dimethylallyladenosine synthase (508 aa).

The segment at 1–21 is disordered; that stretch reads MNEEQRKASGQVSSSDKKSEK. The MTTase N-terminal domain maps to 65 to 183; sequence RKFYIRTYGC…LPELLSECYL (119 aa). 6 residues coordinate [4Fe-4S] cluster: cysteine 74, cysteine 110, cysteine 144, cysteine 220, cysteine 224, and cysteine 227. The Radical SAM core domain occupies 206–436; the sequence is RQGKIKGWVN…NALVNEISAK (231 aa). A TRAM domain is found at 439-502; that stretch reads KEYEGQTVEV…TWSLDGEMVG (64 aa).

The protein belongs to the methylthiotransferase family. MiaB subfamily. In terms of assembly, monomer. [4Fe-4S] cluster serves as cofactor.

The protein resides in the cytoplasm. The catalysed reaction is N(6)-dimethylallyladenosine(37) in tRNA + (sulfur carrier)-SH + AH2 + 2 S-adenosyl-L-methionine = 2-methylsulfanyl-N(6)-dimethylallyladenosine(37) in tRNA + (sulfur carrier)-H + 5'-deoxyadenosine + L-methionine + A + S-adenosyl-L-homocysteine + 2 H(+). Catalyzes the methylthiolation of N6-(dimethylallyl)adenosine (i(6)A), leading to the formation of 2-methylthio-N6-(dimethylallyl)adenosine (ms(2)i(6)A) at position 37 in tRNAs that read codons beginning with uridine. This chain is tRNA-2-methylthio-N(6)-dimethylallyladenosine synthase, found in Bacillus pumilus (strain SAFR-032).